The chain runs to 29 residues: Cytochrome b6-f complex subunit 8 (29 aa).

Residues 3–23 form a helical membrane-spanning segment; the sequence is IVGIAWAALMVVFTFSLSLVV.

This sequence belongs to the PetN family. The 4 large subunits of the cytochrome b6-f complex are cytochrome b6, subunit IV (17 kDa polypeptide, PetD), cytochrome f and the Rieske protein, while the 4 small subunits are PetG, PetL, PetM and PetN. The complex functions as a dimer.

The protein resides in the plastid. It is found in the chloroplast thylakoid membrane. Its function is as follows. Component of the cytochrome b6-f complex, which mediates electron transfer between photosystem II (PSII) and photosystem I (PSI), cyclic electron flow around PSI, and state transitions. This Cryptomeria japonica (Japanese cedar) protein is Cytochrome b6-f complex subunit 8.